The chain runs to 1124 residues: SH3 and PX domain-containing protein 2A (1124 aa).

The region spanning Y4–V128 is the PX domain. Residues M166 to G225 enclose the SH3 1 domain. A Phosphothreonine modification is found at T256. Positions S266–D325 constitute an SH3 2 domain. Phosphoserine occurs at positions 405 and 420. 4 disordered regions span residues Q414–P443, R504–A672, S692–E830, and Y886–S952. In terms of domain architecture, SH3 3 spans S447 to K506. Phosphoserine is present on residues S546 and S566. Residues S575–P585 are compositionally biased toward basic and acidic residues. The residue at position 592 (S592) is a Phosphoserine. The span at S607 to Y619 shows a compositional bias: acidic residues. 2 stretches are compositionally biased toward low complexity: residues S633–K669 and S692–S709. Position 643 is a phosphoserine (S643). Positions G713–V739 are enriched in basic and acidic residues. Position 728 is a phosphothreonine (T728). S764, S766, and S812 each carry phosphoserine. Phosphothreonine is present on T822. In terms of domain architecture, SH3 4 spans G833–N892. Residues S907–T937 are a coiled coil. The span at G912–V924 shows a compositional bias: basic and acidic residues. Residues A926–R935 show a composition bias toward polar residues. Phosphoserine is present on residues S993, S1007, S1008, and S1029. A disordered region spans residues K1020–R1050. Residues N1063–N1124 form the SH3 5 domain.

It belongs to the SH3PXD2 family. In terms of assembly, interacts with ADAM12, ADAM15 and ADAM19. Interacts with NOXO1. Interacts (via SH3 domains) with NOXA1; the interaction is direct. Interacts (via N-terminus) with CYBA. Interacts with FASLG. Interacts (via PX domain) with RAB40B (GTP-bound); interaction promotes invadopodia-mediated extracellular matrix degradation. Post-translationally, tyrosine phosphorylated by SRC. Phosphorylation plays a regulatory role in the protein localization. The intramolecular interaction of the PX domain with the third SH3 domain maintains the protein in the cytoplasm and phosphorylation disrupts this interaction, resulting in the redistribution of the protein from cytoplasm to the perimembrane region. Phosphorylated on serine upon DNA damage, probably by ATM or ATR. In terms of tissue distribution, widely expressed. Not found in the spleen and testis.

The protein resides in the cytoplasm. It localises to the cell projection. Its subcellular location is the podosome. In terms of biological role, adapter protein involved in invadopodia and podosome formation, extracellular matrix degradation and invasiveness of some cancer cells. Binds matrix metalloproteinases (ADAMs), NADPH oxidases (NOXs) and phosphoinositides. Acts as an organizer protein that allows NOX1- or NOX3-dependent reactive oxygen species (ROS) generation and ROS localization. In association with ADAM12, mediates the neurotoxic effect of amyloid-beta peptide. This is SH3 and PX domain-containing protein 2A from Mus musculus (Mouse).